Consider the following 91-residue polypeptide: Cell division topological specificity factor (91 aa).

It belongs to the MinE family.

In terms of biological role, prevents the cell division inhibition by proteins MinC and MinD at internal division sites while permitting inhibition at polar sites. This ensures cell division at the proper site by restricting the formation of a division septum at the midpoint of the long axis of the cell. This Chloroflexus aurantiacus (strain ATCC 29366 / DSM 635 / J-10-fl) protein is Cell division topological specificity factor.